The following is a 536-amino-acid chain: Phosphoenolpyruvate carboxykinase (ATP) (536 aa).

The substrate site is built by arginine 62, tyrosine 203, and lysine 209. ATP-binding positions include lysine 209, histidine 228, and 244-252 (GLSGTGKTT). The Mn(2+) site is built by lysine 209 and histidine 228. Aspartate 265 is a Mn(2+) binding site. ATP contacts are provided by residues glutamate 293, arginine 329, 445 to 446 (RI), and threonine 451. Arginine 329 contributes to the substrate binding site.

Belongs to the phosphoenolpyruvate carboxykinase (ATP) family. Monomer. The cofactor is Mn(2+).

It is found in the cytoplasm. The catalysed reaction is oxaloacetate + ATP = phosphoenolpyruvate + ADP + CO2. The protein operates within carbohydrate biosynthesis; gluconeogenesis. Involved in the gluconeogenesis. Catalyzes the conversion of oxaloacetate (OAA) to phosphoenolpyruvate (PEP) through direct phosphoryl transfer between the nucleoside triphosphate and OAA. This Actinobacillus pleuropneumoniae serotype 5b (strain L20) protein is Phosphoenolpyruvate carboxykinase (ATP).